A 578-amino-acid polypeptide reads, in one-letter code: MEVKGEIYRVAGPVVTAIGLDAKMYDLCKVGNEGLMGEVIQIVGDKTIIQVYEETGGVRPGEPCVTTGMSLAVELGPGLLSSIYDGVQRPLHVLLERTGGFIGRGVTADGLDHKKLWEFKPVVKKGDRVIGGDVIGVVQETVNIEHKIMVRPDISGTVADIKSGSFTVVDTICTLTDGTELQMMQRWPVRKPRPVKRKLTPEKPLVTGQRILDGLFPVAKGGTAAIPGPFGSGKTVTQQQLSKWSDTEIVVYIGCGERGNEMADVLWEFPELEDPQTGRPLMERTILVANTSNMPVAAREASVYTGMTLAEYFRDMGYDVSLMADSTSRWAEAMREISSRLEEMPGEEGYPAYLSARLAEFYERAGVAETLCGEKGSITAIGAVSPPGGDFSEPVTQNTLRIVKVFWALDAKLSQKRHFPAINWLNSYSLYKEDLNDWFTENVAPDYVPMRERAMDMLQTESELQEIVQLVGSDALPEEQQLLLEITRMIREIFLQQNAFHPIDTYSPFEKQYKIMKAIMKWGDAAMDALKSGVLSSEILKMQSKDELPKVKFEEDFEGSLNAVLAKMDKEFAALGGK.

An ATP-binding site is contributed by 228–235 (GPFGSGKT).

It belongs to the ATPase alpha/beta chains family. In terms of assembly, has multiple subunits with at least A(3), B(3), C, D, E, F, G, I and proteolipid K(x).

The protein resides in the cell membrane. It catalyses the reaction ATP + H2O + 4 H(+)(in) = ADP + phosphate + 5 H(+)(out). ATP hydrolysis stimulated by sulfite, ethanol, glycerol, magnesium and zinc ions, inhibited by diethylstilbestrol (DES) and less well by N,N-dicyclohexylcarbodiimide (DCCD). In terms of biological role, component of the A-type ATP synthase that produces ATP from ADP in the presence of a proton gradient across the membrane. The A chain is the catalytic subunit. This Methanosarcina mazei (strain ATCC BAA-159 / DSM 3647 / Goe1 / Go1 / JCM 11833 / OCM 88) (Methanosarcina frisia) protein is A-type ATP synthase subunit A.